A 306-amino-acid polypeptide reads, in one-letter code: D-alanine--D-alanine ligase (306 aa).

The ATP-grasp domain occupies 101–303 (KQVWQGIGLT…FSQLVVKILE (203 aa)). Residue 134–189 (VADLGLPLIVKPSLEGSSVGMTKVNEISELRGALEAAFRYDVDLLVEKWLHGPEYT) coordinates ATP. Mg(2+)-binding residues include aspartate 257, glutamate 270, and asparagine 272.

It belongs to the D-alanine--D-alanine ligase family. The cofactor is Mg(2+). Requires Mn(2+) as cofactor.

It localises to the cytoplasm. The enzyme catalyses 2 D-alanine + ATP = D-alanyl-D-alanine + ADP + phosphate + H(+). It functions in the pathway cell wall biogenesis; peptidoglycan biosynthesis. In terms of biological role, cell wall formation. The chain is D-alanine--D-alanine ligase from Photorhabdus laumondii subsp. laumondii (strain DSM 15139 / CIP 105565 / TT01) (Photorhabdus luminescens subsp. laumondii).